A 490-amino-acid chain; its full sequence is Betaine aldehyde dehydrogenase (490 aa).

K(+)-binding residues include I27 and D93. 150–152 (GAW) contacts NAD(+). The active-site Charge relay system is K162. 176–179 (KPSE) serves as a coordination point for NAD(+). V180 serves as a coordination point for K(+). Position 230–233 (230–233 (GTDT)) interacts with NAD(+). L246 is a K(+) binding site. E252 (proton acceptor) is an active-site residue. 3 residues coordinate NAD(+): G254, C286, and E387. C286 serves as the catalytic Nucleophile. C286 carries the cysteine sulfenic acid (-SOH) modification. K(+)-binding residues include K457 and G460. Residue E464 is the Charge relay system of the active site.

It belongs to the aldehyde dehydrogenase family. As to quaternary structure, dimer of dimers. The cofactor is K(+).

It catalyses the reaction betaine aldehyde + NAD(+) + H2O = glycine betaine + NADH + 2 H(+). It functions in the pathway amine and polyamine biosynthesis; betaine biosynthesis via choline pathway; betaine from betaine aldehyde: step 1/1. Functionally, involved in the biosynthesis of the osmoprotectant glycine betaine. Catalyzes the irreversible oxidation of betaine aldehyde to the corresponding acid. This Pseudomonas savastanoi pv. phaseolicola (strain 1448A / Race 6) (Pseudomonas syringae pv. phaseolicola (strain 1448A / Race 6)) protein is Betaine aldehyde dehydrogenase.